The following is a 517-amino-acid chain: Crotonobetaine/carnitine--CoA ligase (517 aa).

This sequence belongs to the ATP-dependent AMP-binding enzyme family.

It catalyses the reaction 4-(trimethylamino)butanoate + ATP + CoA = 4-(trimethylamino)butanoyl-CoA + AMP + diphosphate. The catalysed reaction is crotonobetaine + ATP + CoA = crotonobetainyl-CoA + AMP + diphosphate. The enzyme catalyses (R)-carnitine + ATP + CoA = (R)-carnitinyl-CoA + AMP + diphosphate. It functions in the pathway amine and polyamine metabolism; carnitine metabolism. Functionally, catalyzes the transfer of CoA to carnitine, generating the initial carnitinyl-CoA needed for the CaiB reaction cycle. Also has activity toward crotonobetaine and gamma-butyrobetaine. The chain is Crotonobetaine/carnitine--CoA ligase from Escherichia coli O17:K52:H18 (strain UMN026 / ExPEC).